A 165-amino-acid chain; its full sequence is MAIKTKTIRRKKIPFLQRIYLPFIFAGMARTFRHFFRNLKDSSNIDFLEYPEQKPTDITNRYRGLHRLTKNEKGDLKCVACDMCATACPANCIFITATEIEGSKEKAPSKFTIDLLECVFCGLCVEACPKDAIRMDTGIFTKVGNTRESFLADIKTLSQREEGSF.

2 consecutive 4Fe-4S ferredoxin-type domains span residues H66 to T98 and S109 to G138. Residues C78, C81, C84, C88, C118, C121, C124, and C128 each contribute to the [4Fe-4S] cluster site.

Belongs to the complex I 23 kDa subunit family. In terms of assembly, NDH-1 is composed of 14 different subunits. Subunits NuoA, H, J, K, L, M, N constitute the membrane sector of the complex. The cofactor is [4Fe-4S] cluster.

The protein localises to the cell inner membrane. The catalysed reaction is a quinone + NADH + 5 H(+)(in) = a quinol + NAD(+) + 4 H(+)(out). Functionally, NDH-1 shuttles electrons from NADH, via FMN and iron-sulfur (Fe-S) centers, to quinones in the respiratory chain. The immediate electron acceptor for the enzyme in this species is believed to be ubiquinone. Couples the redox reaction to proton translocation (for every two electrons transferred, four hydrogen ions are translocated across the cytoplasmic membrane), and thus conserves the redox energy in a proton gradient. The protein is NADH-quinone oxidoreductase subunit I of Campylobacter fetus subsp. fetus (strain 82-40).